The sequence spans 101 residues: NADH-quinone oxidoreductase subunit K (101 aa).

3 consecutive transmembrane segments (helical) span residues 4-24, 30-50, and 61-81; these read LPHY…GIFV, IVIL…LVAF, and IFAM…LAIL.

Belongs to the complex I subunit 4L family. NDH-1 is composed of 14 different subunits. Subunits NuoA, H, J, K, L, M, N constitute the membrane sector of the complex.

It is found in the cell inner membrane. It catalyses the reaction a quinone + NADH + 5 H(+)(in) = a quinol + NAD(+) + 4 H(+)(out). NDH-1 shuttles electrons from NADH, via FMN and iron-sulfur (Fe-S) centers, to quinones in the respiratory chain. The immediate electron acceptor for the enzyme in this species is believed to be ubiquinone. Couples the redox reaction to proton translocation (for every two electrons transferred, four hydrogen ions are translocated across the cytoplasmic membrane), and thus conserves the redox energy in a proton gradient. The chain is NADH-quinone oxidoreductase subunit K from Caulobacter vibrioides (strain ATCC 19089 / CIP 103742 / CB 15) (Caulobacter crescentus).